The chain runs to 166 residues: Phospholipase A2 inhibitor CgMIP-II (166 aa).

The first 19 residues, 1 to 19, serve as a signal peptide directing secretion; the sequence is MRLILLSGLLLLGTFLANG. Positions 46-161 constitute a C-type lectin domain; the sequence is LRYALMTVHN…CDDNLLVVCE (116 aa). Disulfide bonds link Cys83–Cys160 and Cys138–Cys152. Asn122 carries N-linked (GlcNAc...) asparagine glycosylation.

It belongs to the alpha-type phospholipase A2 inhibitor family. As to quaternary structure, homomer composed of 20-25-kDa subunits that form oligomers of 180 kDa. Post-translationally, N-glycosylated. The glycosidic chain may contain superficial sialic acid residues. As to expression, expressed by the liver.

It is found in the secreted. Functionally, selectively inhibits the toxic properties of myotoxin-II from the same venom (AC P81165). Does not inhibit PLA2, anti-coagulant and lethal activities of the basic myotoxin I from the same venom (AC P0DQP6), nor the different crotoxin forms (heterodimer or subunit B alone). Does not block the enzymatic activity of crude acidic PLA2 fractions from the same venom. In Cerrophidion godmani (Porthidium godmani), this protein is Phospholipase A2 inhibitor CgMIP-II.